Consider the following 504-residue polypeptide: Sperm motility kinase 2A (504 aa).

The Protein kinase domain occupies 28-276; it reads YEMLGTIGHG…VAEVMMHPWV (249 aa). Residues 34–42 and K57 each bind ATP; that span reads IGHGGSTKV. Residue D147 is the Proton acceptor of the active site. The UBA domain maps to 294–334; the sequence is KPDPAIVKAMGHIGFQAQDIEDSLRQRKFNETMASYCLLKK. 2 stretches are compositionally biased toward polar residues: residues 376–393 and 443–454; these read PTSL…CGRS and SDESTEGHTSAS. Disordered regions lie at residues 376–403 and 443–469; these read PTSL…RSFS and SDES…PRGI.

The protein belongs to the protein kinase superfamily. CAMK Ser/Thr protein kinase family. Smok subfamily. Testis-specific. Expressed in the testis from 22 days postpartum (22 dpp).

It catalyses the reaction L-seryl-[protein] + ATP = O-phospho-L-seryl-[protein] + ADP + H(+). The catalysed reaction is L-threonyl-[protein] + ATP = O-phospho-L-threonyl-[protein] + ADP + H(+). Its function is as follows. May play a role in sperm motility, especially in the regulation of flagellar function. This is Sperm motility kinase 2A (Smok2a) from Mus musculus (Mouse).